The primary structure comprises 256 residues: Post-translational flagellin modification protein A (256 aa).

Residue S145 coordinates substrate. The active-site Proton acceptor is the Y168.

This sequence belongs to the short-chain dehydrogenases/reductases (SDR) family.

In terms of biological role, required for biosynthesis of LAH modification in the post-translational modification of Campylobacter coli flagellin. The chain is Post-translational flagellin modification protein A (ptmA) from Campylobacter coli.